The primary structure comprises 501 residues: uncharacterized protein (501 aa).

This sequence belongs to the UbiD family.

This is an uncharacterized protein from Synechocystis sp. (strain ATCC 27184 / PCC 6803 / Kazusa).